A 439-amino-acid chain; its full sequence is Keratin, type I cytoskeletal 40 (439 aa).

The segment at 1–89 is head; the sequence is MASDGSPSCC…CEEGSFNSNE (89 aa). The 312-residue stretch at 89 to 400 folds into the IF rod domain; the sequence is EKETMQFLND…GLLEKEDSRL (312 aa). The segment at 90–124 is coil 1A; it reads KETMQFLNDRLASYLERVRSLEENNAELECRIREQ. A linker 1 region spans residues 125-135; the sequence is CEPNAPLVCPD. A coil 1B region spans residues 136–236; sequence YQRYFDTIEE…HEEEVNLLRE (101 aa). Positions 237-252 are linker 12; it reads QLGDRLSVELDTAPTV. The segment at 253 to 396 is coil 2; sequence DLNKVLDEMR…NTYRGLLEKE (144 aa). Residues 397–439 are tail; sequence DSRLPCNPGSGAPMPNSTCEPCSNSMCEPCSAYVICTVENCCA.

Belongs to the intermediate filament family. Heterotetramer of two type I and two type II keratins.

Its function is as follows. May play a role in late hair differentiation. The protein is Keratin, type I cytoskeletal 40 (Krt40) of Mus musculus (Mouse).